A 1012-amino-acid polypeptide reads, in one-letter code: Autotransporter adhesin BpaC (1012 aa).

The N-terminal stretch at Met-1–Asn-71 is a signal peptide. The segment at Asn-72–Gly-921 is surface exposed passenger domain. Disordered stretches follow at residues Gly-420–Thr-746 and Glu-785–Ala-809. Positions Ala-427 to Asp-442 are enriched in polar residues. Positions Asn-443 to Gly-504 are enriched in low complexity. Residues Asp-505–Glu-519 are compositionally biased toward polar residues. The span at Asn-520 to Gly-588 shows a compositional bias: low complexity. Over residues Asp-589–Glu-603 the composition is skewed to polar residues. The span at Asn-604–Gly-630 shows a compositional bias: low complexity. Residues Asp-631–Glu-645 show a composition bias toward polar residues. Composition is skewed to low complexity over residues Asn-646 to Gly-700 and Thr-708 to Thr-746. The segment at Ile-922–Gly-959 is outer membrane translocation of the passenger domain. The translocator domain stretch occupies residues Lys-960–Trp-1012.

Belongs to the autotransporter-2 (AT-2) (TC 1.B.40) family. Homotrimer.

The protein localises to the cell surface. It is found in the cell outer membrane. Its function is as follows. Involved in virulence. Mediates adherence to human respiratory epithelial cells. The chain is Autotransporter adhesin BpaC from Burkholderia mallei (strain ATCC 23344).